Here is a 221-residue protein sequence, read N- to C-terminus: Protein Pisl_1005 (221 aa).

Positions 8–201 constitute an AMMECR1 domain; sequence EEGAYLVKLA…EKTPGGEIYE (194 aa).

This chain is Protein Pisl_1005, found in Pyrobaculum islandicum (strain DSM 4184 / JCM 9189 / GEO3).